Consider the following 248-residue polypeptide: 3-deoxy-manno-octulosonate cytidylyltransferase (248 aa).

The protein belongs to the KdsB family.

Its subcellular location is the cytoplasm. It carries out the reaction 3-deoxy-alpha-D-manno-oct-2-ulosonate + CTP = CMP-3-deoxy-beta-D-manno-octulosonate + diphosphate. It functions in the pathway nucleotide-sugar biosynthesis; CMP-3-deoxy-D-manno-octulosonate biosynthesis; CMP-3-deoxy-D-manno-octulosonate from 3-deoxy-D-manno-octulosonate and CTP: step 1/1. It participates in bacterial outer membrane biogenesis; lipopolysaccharide biosynthesis. Functionally, activates KDO (a required 8-carbon sugar) for incorporation into bacterial lipopolysaccharide in Gram-negative bacteria. This Escherichia coli O6:H1 (strain CFT073 / ATCC 700928 / UPEC) protein is 3-deoxy-manno-octulosonate cytidylyltransferase.